Here is a 309-residue protein sequence, read N- to C-terminus: Nucleotide-binding protein cgR_1639 (309 aa).

32 to 39 (GMSGAGLS) contributes to the ATP binding site. 83 to 86 (DVRS) serves as a coordination point for GTP.

Belongs to the RapZ-like family.

In terms of biological role, displays ATPase and GTPase activities. This chain is Nucleotide-binding protein cgR_1639, found in Corynebacterium glutamicum (strain R).